The primary structure comprises 776 residues: Reticulon-1 (776 aa).

Disordered stretches follow at residues 1–101 (MAAP…KDGE), 137–168 (SESPEELGTPGPSLPDVPGIESRGLFSSDSGI), 205–245 (VKHQ…PAPV), and 285–580 (LTEI…APPP). Ser327 bears the Phosphoserine mark. The segment covering 328 to 341 (PGSITPPSSGTEPS) has biased composition (low complexity). 3 positions are modified to phosphoserine: Ser350, Ser352, and Ser487. Positions 497–511 (AIREETGVRAEERAP) are enriched in basic and acidic residues. One can recognise a Reticulon domain in the interval 589–776 (AIDLLYWRDI…KIPGAKRHAE (188 aa)). Transmembrane regions (helical) follow at residues 603-623 (IVFGSFLLLLFSLTQFSVVSV) and 705-725 (FAVLMWLLTYVGALFNGLTLL).

As to quaternary structure, interacts with NDRG1. Interacts with BACE1. Interacts with TMEM33. In terms of assembly, interacts with UGCG; regulates the ceramide glucosyltransferase activity of UGCG. Isoforms RTN1-A and RTN1-B are phosphorylated. In terms of tissue distribution, expressed in neural and neuroendocrine tissues and cell cultures derived therefrom. Expression of isoform RTN1-C is strongly correlated with neuronal differentiation.

The protein localises to the endoplasmic reticulum membrane. It is found in the golgi apparatus membrane. In terms of biological role, inhibits amyloid precursor protein processing, probably by blocking BACE1 activity. This is Reticulon-1 (RTN1) from Homo sapiens (Human).